The primary structure comprises 186 residues: Dihydrofolate reductase (186 aa).

The DHFR domain maps to 3-184 (PLNCIVAVSQ…IKYKFEVYEK (182 aa)). Residues Ala9 and 15 to 21 (GIGKNGD) each bind NADP(+). 30–35 (EYKYFQ) contributes to the substrate binding site. Lys32 is subject to N6-acetyllysine; alternate. The residue at position 32 (Lys32) is an N6-succinyllysine; alternate. Residue 54–56 (RKT) participates in NADP(+) binding. A substrate-binding site is contributed by Arg70. NADP(+)-binding positions include 76 to 78 (SRE) and 116 to 123 (GGSSVYKE). Cys162 is subject to Cysteine derivative; partial.

It belongs to the dihydrofolate reductase family. In terms of assembly, homodimer.

Its subcellular location is the mitochondrion. The protein resides in the cytoplasm. The enzyme catalyses (6S)-5,6,7,8-tetrahydrofolate + NADP(+) = 7,8-dihydrofolate + NADPH + H(+). The protein operates within cofactor biosynthesis; tetrahydrofolate biosynthesis; 5,6,7,8-tetrahydrofolate from 7,8-dihydrofolate: step 1/1. Functionally, key enzyme in folate metabolism. Contributes to the de novo mitochondrial thymidylate biosynthesis pathway. Catalyzes an essential reaction for de novo glycine and purine synthesis, and for DNA precursor synthesis. Binds its own mRNA and that of DHFR2. The polypeptide is Dihydrofolate reductase (DHFR) (Sus scrofa (Pig)).